The chain runs to 458 residues: Exodeoxyribonuclease 7 large subunit (458 aa).

Belongs to the XseA family. As to quaternary structure, heterooligomer composed of large and small subunits.

The protein localises to the cytoplasm. It carries out the reaction Exonucleolytic cleavage in either 5'- to 3'- or 3'- to 5'-direction to yield nucleoside 5'-phosphates.. In terms of biological role, bidirectionally degrades single-stranded DNA into large acid-insoluble oligonucleotides, which are then degraded further into small acid-soluble oligonucleotides. This chain is Exodeoxyribonuclease 7 large subunit, found in Serratia proteamaculans (strain 568).